Consider the following 1346-residue polypeptide: Pikromycin polyketide synthase component PikAIV (1346 aa).

Residues 3–32 (SSNEQLVDALRASLKENEELRKESRRRADR) are a coiled coil. Residues 34 to 461 (QEPMAIVGMS…GTNAHVVLEE (428 aa)) enclose the Ketosynthase family 3 (KS3) domain. Residues 37 to 1332 (MAIVGMSCRF…HAPAVAEAVL (1296 aa)) form a module 6 region. Active-site for beta-ketoacyl synthase activity residues include cysteine 207, histidine 342, and histidine 382. Residues 562 to 844 (FVFPGQGTQW…VLTMTLPDKV (283 aa)) form an acyltransferase region. The active-site Acyl-ester intermediate; for acyltransferase activity is serine 652. One can recognise a Carrier domain in the interval 945–1020 (SAVLAMVMRQ…ALAERISDEL (76 aa)). At serine 980 the chain carries O-(pantetheine 4'-phosphoryl)serine. Residues 1028 to 1050 (AEPSDHEQAEEEKAAAPAGARSG) form a disordered region. Residues 1030–1041 (PSDHEQAEEEKA) show a composition bias toward basic and acidic residues. A substrate-binding site is contributed by threonine 1125. The thioesterase stretch occupies residues 1127–1332 (ANGGPHEFLR…HAPAVAEAVL (206 aa)). Catalysis depends on serine 1196, which acts as the Nucleophile; for thioesterase activity. 2 residues coordinate substrate: glycine 1197 and aspartate 1224. Histidine 1316 functions as the Proton acceptor; for thioesterase activity in the catalytic mechanism.

Homodimer. Pikromycin PKS consists of a combination of multimodular (PikAI and PikAII) and monomodular (PikAIII and PikAIV) polypeptides each coding for a functional synthase subunit which participates in 1 (monomodular) or 2 (multimodular) of the six FAS-like elongation steps required for formation of the polyketide. Module 1, 2, 3, 4, 5, and 6 participating in biosynthesis steps 1, 2, 3, 4, 5, and 6, respectively. The cofactor is pantetheine 4'-phosphate.

It catalyses the reaction 5 (S)-methylmalonyl-CoA + malonyl-CoA + 5 NADPH + 11 H(+) = 10-deoxymethynolide + 6 CO2 + 5 NADP(+) + 6 CoA + 2 H2O. The enzyme catalyses 6 (S)-methylmalonyl-CoA + malonyl-CoA + 5 NADPH + 12 H(+) = narbonolide + 7 CO2 + 5 NADP(+) + 7 CoA + 2 H2O. Its pathway is antibiotic biosynthesis. Its activity is regulated as follows. Irreversibly inhibited by (2S,3R,4S)-2,4-dihydroxy-3-methylhexyl-phosphonic acid and (3R,4S)-4-hydroxy-3-methyl-2-oxohexyl-phosphonic acid. In terms of biological role, involved in the biosynthesis of 12- and 14-membered ring macrolactone antibiotics such as methymycin and neomethymycin, and pikromycin and narbomycin, respectively. Component of the pikromycin PKS which catalyzes the biosynthesis of both precursors 10-deoxymethynolide (12-membered ring macrolactone) and narbonolide (14-membered ring macrolactone). Chain elongation through PikAI, PikAII and PikAIII followed by thioesterase catalyzed termination results in the production of 10-deoxymethynolide, while continued elongation through PikAIV, followed by thioesterase (TE) catalyzed cyclization results in the biosynthesis of the narbonolide. The thioesterase can use a series of diketide-N-acetylcysteamine (SNAC) thioesters, but has a strong preference for the 2-methyl-3-ketopentanoyl-SNAC over the stereoisomers of 2-methyl-3-hydroxyacyl-SNAC. This Streptomyces venezuelae protein is Pikromycin polyketide synthase component PikAIV.